Consider the following 113-residue polypeptide: Protein suex-1 (113 aa).

Residues 1 to 22 (MQSLLVFCLATIILSNFTEASA) form the signal peptide.

The polypeptide is Protein suex-1 (Caenorhabditis elegans).